Reading from the N-terminus, the 390-residue chain is Probable tRNA pseudouridine synthase D 2 (390 aa).

Catalysis depends on Asp-93, which acts as the Nucleophile. One can recognise a TRUD domain in the interval 166–353 (YVLNYYGIQR…YGTRRKMVTP (188 aa)).

The protein belongs to the pseudouridine synthase TruD family.

It catalyses the reaction uridine(13) in tRNA = pseudouridine(13) in tRNA. Functionally, could be responsible for synthesis of pseudouridine from uracil-13 in transfer RNAs. The sequence is that of Probable tRNA pseudouridine synthase D 2 from Methanococcus maripaludis (strain DSM 14266 / JCM 13030 / NBRC 101832 / S2 / LL).